Here is a 144-residue protein sequence, read N- to C-terminus: MEKFLDINEIKKIIPHRYPFLLVDKITELEEGKSAVGYKNVTANEYFFNGHFPEEPVMPGVLIIEALAQVGAVAILSKEEFKGKIAYFGGINKAKFRKKVVPGDVLKLSIDLTKIKGVAGVGKAVATVDGKVAAEAELLFVIGK.

Residue histidine 51 is part of the active site.

It belongs to the thioester dehydratase family. FabZ subfamily.

It localises to the cytoplasm. The enzyme catalyses a (3R)-hydroxyacyl-[ACP] = a (2E)-enoyl-[ACP] + H2O. Its function is as follows. Involved in unsaturated fatty acids biosynthesis. Catalyzes the dehydration of short chain beta-hydroxyacyl-ACPs and long chain saturated and unsaturated beta-hydroxyacyl-ACPs. The polypeptide is 3-hydroxyacyl-[acyl-carrier-protein] dehydratase FabZ (Clostridium botulinum (strain ATCC 19397 / Type A)).